Consider the following 301-residue polypeptide: RNA polymerase II holoenzyme cyclin-like subunit (301 aa).

Positions 53 to 142 constitute a Cyclin N-terminal domain; that stretch reads QQLIKLGKRM…LGECEFALIS (90 aa).

Belongs to the cyclin family. Cyclin C subfamily. In terms of assembly, component of the srb8-11 complex, a regulatory module of the Mediator complex.

Its subcellular location is the nucleus. Its function is as follows. Component of the srb8-11 complex. The srb8-11 complex is a regulatory module of the Mediator complex which is itself involved in regulation of basal and activated RNA polymerase II-dependent transcription. The srb8-11 complex may be involved in the transcriptional repression of a subset of genes regulated by Mediator. It may inhibit the association of the Mediator complex with RNA polymerase II to form the holoenzyme complex. The srb8-11 complex phosphorylates the C-terminal domain (CTD) of the largest subunit of RNA polymerase II. This chain is RNA polymerase II holoenzyme cyclin-like subunit (ssn8), found in Aspergillus oryzae (strain ATCC 42149 / RIB 40) (Yellow koji mold).